Reading from the N-terminus, the 288-residue chain is Nucleotide-binding protein Pcar_1935 (288 aa).

11–18 (GLSGSGKT) contacts ATP. 62 to 65 (DVRN) serves as a coordination point for GTP.

This sequence belongs to the RapZ-like family.

Functionally, displays ATPase and GTPase activities. This is Nucleotide-binding protein Pcar_1935 from Syntrophotalea carbinolica (strain DSM 2380 / NBRC 103641 / GraBd1) (Pelobacter carbinolicus).